The chain runs to 105 residues: UPF0145 protein lpp0255 (105 aa).

The protein belongs to the UPF0145 family.

The protein is UPF0145 protein lpp0255 of Legionella pneumophila (strain Paris).